Reading from the N-terminus, the 36-residue chain is Photosystem I reaction center subunit VIII (36 aa).

A helical transmembrane segment spans residues 10–29 (FVPLVGLVFPAIAMASLFLY).

This sequence belongs to the PsaI family.

Its subcellular location is the plastid. It is found in the chloroplast thylakoid membrane. May help in the organization of the PsaL subunit. The polypeptide is Photosystem I reaction center subunit VIII (Oryza nivara (Indian wild rice)).